A 442-amino-acid polypeptide reads, in one-letter code: tRNA modification GTPase MnmE (442 aa).

Residues R21, E79, and K118 each coordinate (6S)-5-formyl-5,6,7,8-tetrahydrofolate. The 154-residue stretch at 214–367 folds into the TrmE-type G domain; that stretch reads GFKIAIVGKP…LKEELQNYLN (154 aa). Position 224 (N224) interacts with K(+). Residues 224–229, 243–249, and 268–271 contribute to the GTP site; these read NVGKSS, SDIAGTT, and DTAG. S228 provides a ligand contact to Mg(2+). Residues S243, I245, and T248 each coordinate K(+). T249 lines the Mg(2+) pocket. K442 serves as a coordination point for (6S)-5-formyl-5,6,7,8-tetrahydrofolate.

The protein belongs to the TRAFAC class TrmE-Era-EngA-EngB-Septin-like GTPase superfamily. TrmE GTPase family. As to quaternary structure, homodimer. Heterotetramer of two MnmE and two MnmG subunits. The cofactor is K(+).

It is found in the cytoplasm. Its function is as follows. Exhibits a very high intrinsic GTPase hydrolysis rate. Involved in the addition of a carboxymethylaminomethyl (cmnm) group at the wobble position (U34) of certain tRNAs, forming tRNA-cmnm(5)s(2)U34. This Campylobacter jejuni subsp. jejuni serotype O:2 (strain ATCC 700819 / NCTC 11168) protein is tRNA modification GTPase MnmE.